The chain runs to 143 residues: Large ribosomal subunit protein uL11 (143 aa).

This sequence belongs to the universal ribosomal protein uL11 family. As to quaternary structure, part of the ribosomal stalk of the 50S ribosomal subunit. Interacts with L10 and the large rRNA to form the base of the stalk. L10 forms an elongated spine to which L12 dimers bind in a sequential fashion forming a multimeric L10(L12)X complex. Post-translationally, one or more lysine residues are methylated.

Functionally, forms part of the ribosomal stalk which helps the ribosome interact with GTP-bound translation factors. The chain is Large ribosomal subunit protein uL11 from Borreliella burgdorferi (strain ATCC 35210 / DSM 4680 / CIP 102532 / B31) (Borrelia burgdorferi).